The sequence spans 446 residues: Protein dyf-7 (446 aa).

Positions 1-24 (MNQLWRASCLQVLITFLLIHQNKA) are cleaved as a signal peptide. The region spanning 35–295 (DCIADSFTVV…KTCYKKVSDS (261 aa)) is the ZP domain. The cysteines at positions 211 and 273 are disulfide-linked. A helical transmembrane segment spans residues 377–397 (IPLIIMGSLASLLLFSAGAAI).

In terms of assembly, monomer under reducing conditions. Homodimer under non-reducing conditions. May also form higher order oligomers. Post-translationally, proteolytically cleaved and secreted in vitro. In terms of tissue distribution, in the embryo, expressed in the excretory cell and, during dendrite formation, in the non-neuronal cells surrounding the sensory neurons, including hypodermal cells.

It localises to the cell membrane. The protein localises to the cell projection. The protein resides in the dendrite. Its subcellular location is the secreted. Its function is as follows. Required for permeability of amphid and phasmid neurons to external dyes, chemotaxis to ammonium chloride, avoidance of high osmotic stimuli, male mating and dauer formation. Along with dex-1, enables neurite growth and maintenance by anchoring amphid dendritic tips during neuron cell body migration in embryonic and larval development. This chain is Protein dyf-7, found in Caenorhabditis elegans.